A 122-amino-acid polypeptide reads, in one-letter code: T cell receptor gamma variable 9 (122 aa).

The N-terminal stretch at 1–20 is a signal peptide; the sequence is MLSLLHTSTLAVLGALCVYG. Residues 27–122 form the Ig-like domain; the sequence is PQISSTKTLS…ATYYCALWEV (96 aa). Residues C43 and C117 are joined by a disulfide bond.

As to quaternary structure, gamma-delta TR is a heterodimer composed of a gamma and delta chain; disulfide-linked. The gamma-delta TR is associated with the transmembrane signaling CD3 coreceptor proteins following the stoichiometry: a single gamma-delta TR heterodimer associates with one CD3D-CD3E heterodimer, one CD3G-CD3E heterodimer and one CD247 homodimer forming a stable octameric structure. Upon activation, gamma-delta TR complex associates with FCER1G to initiate intracellular signaling.

It localises to the cell membrane. Functionally, v region of the variable domain of T cell receptor (TR) gamma chain that participates in the antigen recognition. Gamma-delta TRs recognize a variety of self and foreign non-peptide antigens frequently expressed at the epithelial boundaries between the host and external environment, including endogenous lipids presented by MH-like protein CD1D and phosphoantigens presented by butyrophilin-like molecule BTN3A1. Upon antigen recognition induces rapid, innate-like immune responses involved in pathogen clearance and tissue repair. Binding of gamma-delta TR complex to antigen triggers phosphorylation of immunoreceptor tyrosine-based activation motifs (ITAMs) in the CD3 chains by the LCK and FYN kinases, allowing the recruitment, phosphorylation, and activation of ZAP70 that facilitates phosphorylation of the scaffolding proteins LCP2 and LAT. This lead to the formation of a supramolecular signalosome that recruits the phospholipase PLCG1, resulting in calcium mobilization and ERK activation, ultimately leading to T cell expansion and differentiation into effector cells. Gamma-delta TRs are produced through somatic rearrangement of a limited repertoire of variable (V), diversity (D), and joining (J) genes. The potential diversity of gamma-delta TRs is conferred by the unique ability to rearrange (D) genes in tandem and to utilize all three reading frames. The combinatorial diversity is considerably increased by the sequence exonuclease trimming and random nucleotide (N) region additions which occur during the V-(D)-J rearrangements. The polypeptide is T cell receptor gamma variable 9 (Homo sapiens (Human)).